We begin with the raw amino-acid sequence, 113 residues long: Hydrogenase maturation factor HypA (113 aa).

Ni(2+) is bound at residue histidine 2. Zn(2+) is bound by residues cysteine 73, cysteine 76, cysteine 89, and cysteine 92.

The protein belongs to the HypA/HybF family.

Functionally, involved in the maturation of [NiFe] hydrogenases. Required for nickel insertion into the metal center of the hydrogenase. The sequence is that of Hydrogenase maturation factor HypA from Albidiferax ferrireducens (strain ATCC BAA-621 / DSM 15236 / T118) (Rhodoferax ferrireducens).